The chain runs to 514 residues: Arabinose import ATP-binding protein AraG (514 aa).

ABC transporter domains are found at residues 16-251 (LRFN…MVGR) and 251-507 (RDIQ…LPRH). An ATP-binding site is contributed by 48-55 (GENGAGKS).

Belongs to the ABC transporter superfamily. Arabinose importer (TC 3.A.1.2.2) family. The complex is composed of two ATP-binding proteins (AraG), two transmembrane proteins (AraH) and a solute-binding protein (AraF).

It is found in the cell inner membrane. The catalysed reaction is L-arabinose(out) + ATP + H2O = L-arabinose(in) + ADP + phosphate + H(+). In terms of biological role, part of the ABC transporter complex AraFGH involved in arabinose import. Responsible for energy coupling to the transport system. The sequence is that of Arabinose import ATP-binding protein AraG from Pseudomonas fluorescens (strain Pf0-1).